We begin with the raw amino-acid sequence, 104 residues long: BLOC-1-related complex subunit 7 (104 aa).

The protein belongs to the BORCS7 family.

It is found in the lysosome membrane. Functionally, as part of a BORC-like complex may play a role in lysosomes movement and localization at the cell periphery. Associated with the cytosolic face of lysosomes, this complex may couple lysosomes to microtubule plus-end-directed kinesin motor. This Xenopus tropicalis (Western clawed frog) protein is BLOC-1-related complex subunit 7.